The sequence spans 73 residues: Serine rich endogenous peptide 14 (73 aa).

Residues 1–31 (MAAKTSNLVALLLSLFLLLLSISSQVGLGEA) form the signal peptide. Positions 44–73 (VSHPSPPPPHRSMAPPIFVPPSTSHKGQGP) are disordered. An SCOOP motif motif is present at residues 59 to 73 (PIFVPPSTSHKGQGP). The segment covering 64 to 73 (PSTSHKGQGP) has biased composition (polar residues). The SxS motif essential for MIK2 binding motif lies at 65-67 (STS).

The protein belongs to the serine rich endogenous peptide (SCOOP) phytocytokine family. In terms of assembly, interacts with MIK2 (via extracellular leucine-rich repeat domain); this interaction triggers the formation of complex between MIK2 and the BAK1/SERK3 and SERK4 coreceptors, and subsequent BAK1 activation by phosphorylation. As to expression, mostly expressed in seedlings shoots and leaves, and, to a lower extent, in roots, stems, siliques, seeds and flowers.

The protein resides in the cell membrane. Its subcellular location is the secreted. It is found in the extracellular space. It localises to the apoplast. Brassicaceae-specific phytocytokine (plant endogenous peptide released into the apoplast) perceived by MIK2 in a BAK1/SERK3 and SERK4 coreceptors-dependent manner, that modulates various physiological and antimicrobial processes including growth prevention and reactive oxygen species (ROS) response regulation. Inhibits root growth and regulates root meristems. Prevents general growth and development. Exhibits antibacterial effects against Pseudomonas syringae pv. tomato DC3000, Ralstonia solanacearum, Bacillus subtilis and Agrobacterium tumefaciens, thus being an antimicrobial peptide (AMP). This chain is Serine rich endogenous peptide 14, found in Arabidopsis thaliana (Mouse-ear cress).